The primary structure comprises 1581 residues: Rho guanine nucleotide exchange factor 5 (1581 aa).

Disordered regions lie at residues 25–54 (EGIM…TDGH), 159–274 (VSKE…EQKQ), 316–643 (LRDS…RDGI), 659–700 (SEEF…PPTV), 741–810 (HSHP…PEFY), and 829–1051 (VPII…GSSD). Basic and acidic residues predominate over residues 41–54 (QEDRDPSYKWTDGH). The span at 204-221 (KQLQLEATQENQGQEGFL) shows a compositional bias: polar residues. Residues 228 to 241 (GLEEQEGQEVEIQE) are compositionally biased toward acidic residues. 2 stretches are compositionally biased toward basic and acidic residues: residues 326–336 (QESREVEERRV) and 345–380 (RLVE…DSGD). Position 446 is a phosphoserine (S446). The segment covering 474–492 (LDNRTHNSQQEEFRLRKGI) has biased composition (basic and acidic residues). Residues 496–507 (SASTSVAPSGTR) show a composition bias toward polar residues. The span at 515 to 531 (PNVFSSTATLSPVSSSV) shows a compositional bias: low complexity. Polar residues-rich tracts occupy residues 569–595 (TSDT…NSFP), 603–613 (TPDSLGMSLSF), 662–685 (FTSN…QNSA), 748–760 (TLSS…SKGS), and 779–791 (TPES…TSIP). Positions 829–843 (VPIIDPSSEPPPLPP) are enriched in pro residues. 3 stretches are compositionally biased toward polar residues: residues 867–881 (PNNQ…SVGR), 889–905 (GRST…NNEV), and 912–925 (SNMT…SPTT). Phosphoserine occurs at positions 953 and 969. Residues 975–986 (KNSEKPLHHQLE) show a composition bias toward basic and acidic residues. Residues S1029 and S1110 each carry the phosphoserine modification. The DH domain maps to 1158-1342 (KLQEAKFELI…EKLIRDCNSN (185 aa)). A PH domain is found at 1375 to 1488 (LVKSGELTAL…SALAMPREEL (114 aa)). The SH3 domain maps to 1494–1555 (YDSPQVQCLR…PVQQVEFISN (62 aa)).

Interacts with SRC. Forms a ternary complex with SRC and the PI3K 85 kDa subunit. Interacts with and is activated by the heterodimer formed by GNB1 and GNG2. Interacts with ODAM (via C-terminus). Interacts with RHOA. Post-translationally, activation of SRC induces tyrosine phosphorylation of ARHGEF5.

Its subcellular location is the nucleus. It localises to the cytoplasm. The protein localises to the cell projection. It is found in the podosome. In terms of biological role, guanine nucleotide exchange factor which activates Rho GTPases. Strongly activates RHOA. Also strongly activates RHOB, weakly activates RHOC and RHOG and shows no effect on RHOD, RHOV, RHOQ or RAC1. Involved in regulation of cell shape and actin cytoskeletal organization. Plays a role in actin organization by generating a loss of actin stress fibers and the formation of membrane ruffles and filopodia. Required for SRC-induced podosome formation. Involved in positive regulation of immature dendritic cell migration. The sequence is that of Rho guanine nucleotide exchange factor 5 from Mus musculus (Mouse).